The chain runs to 257 residues: NAD-capped RNA hydrolase NudC (257 aa).

Substrate is bound at residue arginine 69. The Zn(2+) site is built by cysteine 98 and cysteine 101. Glutamate 111 serves as a coordination point for substrate. Residues cysteine 116 and cysteine 119 each coordinate Zn(2+). Tyrosine 124 lines the substrate pocket. The 124-residue stretch at 125–248 (PQIAPCIIVA…TVARRLIEDT (124 aa)) folds into the Nudix hydrolase domain. Positions 158, 174, and 178 each coordinate a divalent metal cation. A Nudix box motif is present at residues 159–180 (GFVEVGETLEQAVAREVMEESG). 192-199 (QPWPFPQS) is a substrate binding site. A divalent metal cation is bound at residue glutamate 219. Position 241 (alanine 241) interacts with substrate.

The protein belongs to the Nudix hydrolase family. NudC subfamily. In terms of assembly, homodimer. Mg(2+) is required as a cofactor. It depends on Mn(2+) as a cofactor. The cofactor is Zn(2+).

It carries out the reaction a 5'-end NAD(+)-phospho-ribonucleoside in mRNA + H2O = a 5'-end phospho-adenosine-phospho-ribonucleoside in mRNA + beta-nicotinamide D-ribonucleotide + 2 H(+). It catalyses the reaction NAD(+) + H2O = beta-nicotinamide D-ribonucleotide + AMP + 2 H(+). The catalysed reaction is NADH + H2O = reduced beta-nicotinamide D-ribonucleotide + AMP + 2 H(+). In terms of biological role, mRNA decapping enzyme that specifically removes the nicotinamide adenine dinucleotide (NAD) cap from a subset of mRNAs by hydrolyzing the diphosphate linkage to produce nicotinamide mononucleotide (NMN) and 5' monophosphate mRNA. The NAD-cap is present at the 5'-end of some mRNAs and stabilizes RNA against 5'-processing. Has preference for mRNAs with a 5'-end purine. Catalyzes the hydrolysis of a broad range of dinucleotide pyrophosphates. In Salmonella schwarzengrund (strain CVM19633), this protein is NAD-capped RNA hydrolase NudC.